We begin with the raw amino-acid sequence, 227 residues long: ATP synthase F(0) complex subunit a (227 aa).

The next 6 membrane-spanning stretches (helical) occupy residues 14–34 (LLGIPLILLSLLFPTLLLPSP), 69–89 (WALILTSLMTFLLLINLLGLL), 98–118 (QLSMNMALAFPLWLATLLTGL), 139–159 (IPALILIETTSLLIRPLALGV), 174–194 (LISTATLALLPTMPTISVLTA), and 196–216 (VLLLLTILELAVAMIQAYVFV).

Belongs to the ATPase A chain family. Component of the ATP synthase complex composed at least of ATP5F1A/subunit alpha, ATP5F1B/subunit beta, ATP5MC1/subunit c (homooctomer), MT-ATP6/subunit a, MT-ATP8/subunit 8, ATP5ME/subunit e, ATP5MF/subunit f, ATP5MG/subunit g, ATP5MK/subunit k, ATP5MJ/subunit j, ATP5F1C/subunit gamma, ATP5F1D/subunit delta, ATP5F1E/subunit epsilon, ATP5PF/subunit F6, ATP5PB/subunit b, ATP5PD/subunit d, ATP5PO/subunit OSCP. ATP synthase complex consists of a soluble F(1) head domain (subunits alpha(3) and beta(3)) - the catalytic core - and a membrane F(0) domain - the membrane proton channel (subunits c, a, 8, e, f, g, k and j). These two domains are linked by a central stalk (subunits gamma, delta, and epsilon) rotating inside the F1 region and a stationary peripheral stalk (subunits F6, b, d, and OSCP). Interacts with DNAJC30; interaction is direct.

It localises to the mitochondrion inner membrane. The catalysed reaction is H(+)(in) = H(+)(out). In terms of biological role, subunit a, of the mitochondrial membrane ATP synthase complex (F(1)F(0) ATP synthase or Complex V) that produces ATP from ADP in the presence of a proton gradient across the membrane which is generated by electron transport complexes of the respiratory chain. ATP synthase complex consist of a soluble F(1) head domain - the catalytic core - and a membrane F(1) domain - the membrane proton channel. These two domains are linked by a central stalk rotating inside the F(1) region and a stationary peripheral stalk. During catalysis, ATP synthesis in the catalytic domain of F(1) is coupled via a rotary mechanism of the central stalk subunits to proton translocation. With the subunit c (ATP5MC1), forms the proton-conducting channel in the F(0) domain, that contains two crucial half-channels (inlet and outlet) that facilitate proton movement from the mitochondrial intermembrane space (IMS) into the matrix. Protons are taken up via the inlet half-channel and released through the outlet half-channel, following a Grotthuss mechanism. The polypeptide is ATP synthase F(0) complex subunit a (Struthio camelus (Common ostrich)).